The primary structure comprises 191 residues: MANVSIHPAVDGGVVHGSTEGFAGGTLQCLCASNKVTVDVASQSAHNHACGCSKCWKPEGAKFSVVAVAPRDKVTVTAHPEKLKIVDESATIQRHACTGCGVHLYGRIENKDHAFYGLDFIHTELSQQSGWSPPGFAAFVSSIIETGTPPDQMDGVRARLTELGLTPYDCLSPALMDALSTNVARHKGLLH.

In terms of domain architecture, CENP-V/GFA spans 22-169 (FAGGTLQCLC…LTELGLTPYD (148 aa)). Zn(2+) is bound by residues C29, C31, C50, C52, C55, C97, and C100.

This sequence belongs to the Gfa family. It depends on Zn(2+) as a cofactor.

It catalyses the reaction S-(hydroxymethyl)glutathione = glutathione + formaldehyde. Its pathway is one-carbon metabolism; formaldehyde degradation; formate from formaldehyde (glutathione route): step 1/3. Functionally, catalyzes the condensation of formaldehyde and glutathione to S-hydroxymethylglutathione. In Xanthomonas campestris pv. campestris (strain 8004), this protein is Glutathione-dependent formaldehyde-activating enzyme.